A 723-amino-acid chain; its full sequence is Homeobox protein HAT3.1 (723 aa).

Residues 1–10 are compositionally biased toward basic residues; that stretch reads MYKAVSKRVT. Disordered stretches follow at residues 1–94 and 135–173; these read MYKA…GSHR and KRAQ…QVRE. Residues 11-23 are compositionally biased toward polar residues; it reads RSSGSGLKQTNVD. Residues 58–83 are compositionally biased toward basic and acidic residues; sequence LHHEIMDHGKGNEEQKPTPQTVKKDS. Residues 265 to 322 form a PHD-type zinc finger; that stretch reads DIFCAKCGSKDLSVDNDIILCDGFCDRGFHQYCLEPPLRKEDIPPDDEGWLCPGCDCK. Disordered regions lie at residues 357 to 628 and 680 to 723; these read GGQN…KTQR and VEKL…RRRK. A compositionally biased stretch (acidic residues) spans 365–407; that stretch reads LPSDDSDDEEYDPDCLNDNENDEDGSDDNEESENEDGSSDETE. The span at 417 to 427 shows a compositional bias: basic and acidic residues; the sequence is ESFKEGKDIMK. The span at 435-453 shows a compositional bias: acidic residues; the sequence is DDSEDDDYDPDAPTCDDDK. Basic and acidic residues-rich tracts occupy residues 518-530 and 547-556; these read RNVE…KLYD and DKTARMGKED. The span at 580–589 shows a compositional bias: basic residues; sequence KKLIRKSKRA. Positions 614–673 form a DNA-binding region, homeobox; sequence SSSSACKQTDPKTQRLYISFQENQYPDKATKESLAKELQMTVKQVNNWFKHRRWSINSKP. The span at 680–690 shows a compositional bias: basic and acidic residues; sequence VEKLKTGKEGE. Residues 695-705 show a composition bias toward polar residues; that stretch reads VAGSSKQTMET.

This sequence belongs to the PHD-associated homeobox family. Primarily detected in root tissue.

It is found in the nucleus. Functionally, binds only to large DNA fragments. Recognizes a DNA fragment carrying 8 copies of box7 motif of the light-induced cab-E promoter of Nicotiana plumbaginifolia. Also recognizes the box7m1 motif. This Arabidopsis thaliana (Mouse-ear cress) protein is Homeobox protein HAT3.1 (HAT3.1).